The chain runs to 258 residues: 5'-nucleotidase SurE (258 aa).

A divalent metal cation contacts are provided by aspartate 13, aspartate 14, serine 44, and asparagine 92. The interval 237-258 (SPLTAPHSTEHHDALDGIATEF) is disordered.

This sequence belongs to the SurE nucleotidase family. It depends on a divalent metal cation as a cofactor.

The protein resides in the cytoplasm. The enzyme catalyses a ribonucleoside 5'-phosphate + H2O = a ribonucleoside + phosphate. Nucleotidase that shows phosphatase activity on nucleoside 5'-monophosphates. The chain is 5'-nucleotidase SurE from Halobacterium salinarum (strain ATCC 29341 / DSM 671 / R1).